Consider the following 255-residue polypeptide: Hydroxyacylglutathione hydrolase (255 aa).

Zn(2+)-binding residues include His52, His54, Asp56, His57, His108, Asp130, and His168.

The protein belongs to the metallo-beta-lactamase superfamily. Glyoxalase II family. In terms of assembly, monomer. Requires Zn(2+) as cofactor.

It carries out the reaction an S-(2-hydroxyacyl)glutathione + H2O = a 2-hydroxy carboxylate + glutathione + H(+). It participates in secondary metabolite metabolism; methylglyoxal degradation; (R)-lactate from methylglyoxal: step 2/2. Thiolesterase that catalyzes the hydrolysis of S-D-lactoyl-glutathione to form glutathione and D-lactic acid. The chain is Hydroxyacylglutathione hydrolase from Albidiferax ferrireducens (strain ATCC BAA-621 / DSM 15236 / T118) (Rhodoferax ferrireducens).